We begin with the raw amino-acid sequence, 162 residues long: Peptidyl-prolyl cis-trans isomerase-like 1 (162 aa).

Residues 1-155 form the PPIase cyclophilin-type domain; sequence MATDVAFDTS…DGVKILRARI (155 aa).

It belongs to the cyclophilin-type PPIase family. PPIL1 subfamily.

It catalyses the reaction [protein]-peptidylproline (omega=180) = [protein]-peptidylproline (omega=0). Functionally, PPIases accelerate the folding of proteins. It catalyzes the cis-trans isomerization of proline imidic peptide bonds in oligopeptides. This is Peptidyl-prolyl cis-trans isomerase-like 1 (cypC) from Aspergillus niger.